Reading from the N-terminus, the 315-residue chain is MIKLGIVMDPISEINIKKDSSFAMLMAAQERGYQLFYMEMADLAIVNGVAMGNMRPLKVMNDANHWFELGEAKDTPLSELNVVLMRKDPPFDTEYIYATYMLERAEEQGVLIVNKPQSLRDANEKLFTAWFSEFTPETIVTRDANRIRAFHQAKGDIILKPLDGMGGTSIFRVKQDDPNLGVIIETLTQYGNQYAMAQAFIPEITKGDKRILVVDGEPVPYALARIPKKGETRGNLAAGGSGVAQPLSDSDWKIARAIGPELKKRGLIFVGLDVIGDKLTEINVTSPTCIREIQAAFDVDITGMLFDAIETRLGQ.

The ATP-grasp domain maps to 125–310; it reads KLFTAWFSEF…ITGMLFDAIE (186 aa). 151 to 207 is an ATP binding site; sequence HQAKGDIILKPLDGMGGTSIFRVKQDDPNLGVIIETLTQYGNQYAMAQAFIPEITKG. Residues Glu281 and Asn283 each coordinate Mg(2+).

The protein belongs to the prokaryotic GSH synthase family. It depends on Mg(2+) as a cofactor. Mn(2+) serves as cofactor.

The enzyme catalyses gamma-L-glutamyl-L-cysteine + glycine + ATP = glutathione + ADP + phosphate + H(+). It participates in sulfur metabolism; glutathione biosynthesis; glutathione from L-cysteine and L-glutamate: step 2/2. In Shewanella oneidensis (strain ATCC 700550 / JCM 31522 / CIP 106686 / LMG 19005 / NCIMB 14063 / MR-1), this protein is Glutathione synthetase.